The chain runs to 485 residues: P2X purinoceptor 2 (485 aa).

The Cytoplasmic portion of the chain corresponds to Met1–Gly43. 6 disulfide bridges follow: Cys22-Cys443, Cys126-Cys177, Cys137-Cys160, Cys143-Cys171, Cys227-Cys237, and Cys271-Cys280. Residues Phe44–Val64 traverse the membrane as a helical segment. At Gln65 to Ser339 the chain is on the extracellular side. 2 residues coordinate ATP: Lys82 and Lys84. Residue Asn195 is glycosylated (N-linked (GlcNAc...) asparagine). Thr197 contributes to the ATP binding site. The N-linked (GlcNAc...) asparagine glycan is linked to Asn252. ATP-binding residues include Ser297, Asn301, and Arg303. Asn311 carries an N-linked (GlcNAc...) asparagine glycan. An ATP-binding site is contributed by Lys321. The pore-forming motif stretch occupies residues Ala322–Ala335. A helical membrane pass occupies residues Leu340–Leu360. The Cytoplasmic portion of the chain corresponds to Cys361 to Leu485. The disordered stretch occupies residues Pro406–Leu485. Residues Pro420–Ala436 show a composition bias toward low complexity. Positions Pro469 to Asp478 are enriched in polar residues.

The protein belongs to the P2X receptor family. In terms of assembly, homotrimer and heterotrimer; functional P2XRs are organized as homomeric and heteromeric trimers. Homotrimer. Forms heterotrimer with P2XR1. Forms heterotrimer with P2XR3. Forms heterotrimer with P2XR6.

The protein resides in the cell membrane. It carries out the reaction Ca(2+)(in) = Ca(2+)(out). It catalyses the reaction K(+)(in) = K(+)(out). The enzyme catalyses Na(+)(in) = Na(+)(out). With respect to regulation, fast activation by external ATP. Exhibits slow desensitization during prolonged ATP activation. Not sensitive to the ATP agonist:alpha/beta-methylene-ATP. ATP-gated nonselective transmembrane cation channel permeable to potassium, sodium and calcium. Activation by extracellular ATP induces a variety of cellular responses, such as excitatory postsynaptic responses in sensory neurons, neuromuscular junctions (NMJ) formation, hearing, perception of taste and peristalsis. In the inner ear, regulates sound transduction and auditory neurotransmission, outer hair cell electromotility, inner ear gap junctions, and K(+) recycling. Mediates synaptic transmission between neurons and from neurons to smooth muscle. This Mus musculus (Mouse) protein is P2X purinoceptor 2 (P2rx2).